The chain runs to 235 residues: Sugar fermentation stimulation protein homolog (235 aa).

It belongs to the SfsA family.

In Roseobacter denitrificans (strain ATCC 33942 / OCh 114) (Erythrobacter sp. (strain OCh 114)), this protein is Sugar fermentation stimulation protein homolog.